A 101-amino-acid chain; its full sequence is Integration host factor subunit alpha (101 aa).

The protein belongs to the bacterial histone-like protein family. As to quaternary structure, heterodimer of an alpha and a beta chain.

In terms of biological role, this protein is one of the two subunits of integration host factor, a specific DNA-binding protein that functions in genetic recombination as well as in transcriptional and translational control. The polypeptide is Integration host factor subunit alpha (Saccharophagus degradans (strain 2-40 / ATCC 43961 / DSM 17024)).